The following is a 229-amino-acid chain: Uracil-DNA glycosylase (229 aa).

D67 (proton acceptor) is an active-site residue.

It belongs to the uracil-DNA glycosylase (UDG) superfamily. UNG family.

The protein resides in the cytoplasm. The enzyme catalyses Hydrolyzes single-stranded DNA or mismatched double-stranded DNA and polynucleotides, releasing free uracil.. Functionally, excises uracil residues from the DNA which can arise as a result of misincorporation of dUMP residues by DNA polymerase or due to deamination of cytosine. The polypeptide is Uracil-DNA glycosylase (Coxiella burnetii (strain RSA 493 / Nine Mile phase I)).